We begin with the raw amino-acid sequence, 260 residues long: NAD-capped RNA hydrolase NudC (260 aa).

2 residues coordinate substrate: K25 and R69. Residues C98 and C101 each coordinate Zn(2+). Residue E111 participates in substrate binding. Zn(2+) is bound by residues C116 and C119. Y124 contributes to the substrate binding site. One can recognise a Nudix hydrolase domain in the interval P125–T248. A divalent metal cation is bound by residues A158, E174, and E178. Positions G159–N180 match the Nudix box motif. Q192–S199 contacts substrate. E219 contacts a divalent metal cation. A241 lines the substrate pocket.

Belongs to the Nudix hydrolase family. NudC subfamily. In terms of assembly, homodimer. The cofactor is Mg(2+). Mn(2+) serves as cofactor. Requires Zn(2+) as cofactor.

The catalysed reaction is a 5'-end NAD(+)-phospho-ribonucleoside in mRNA + H2O = a 5'-end phospho-adenosine-phospho-ribonucleoside in mRNA + beta-nicotinamide D-ribonucleotide + 2 H(+). It catalyses the reaction NAD(+) + H2O = beta-nicotinamide D-ribonucleotide + AMP + 2 H(+). It carries out the reaction NADH + H2O = reduced beta-nicotinamide D-ribonucleotide + AMP + 2 H(+). Functionally, mRNA decapping enzyme that specifically removes the nicotinamide adenine dinucleotide (NAD) cap from a subset of mRNAs by hydrolyzing the diphosphate linkage to produce nicotinamide mononucleotide (NMN) and 5' monophosphate mRNA. The NAD-cap is present at the 5'-end of some mRNAs and stabilizes RNA against 5'-processing. Has preference for mRNAs with a 5'-end purine. Catalyzes the hydrolysis of a broad range of dinucleotide pyrophosphates. In Yersinia pestis bv. Antiqua (strain Antiqua), this protein is NAD-capped RNA hydrolase NudC.